The chain runs to 71 residues: Large ribosomal subunit protein bL31 (71 aa).

Residues Cys-16, Cys-18, Cys-37, and Cys-40 each coordinate Zn(2+).

It belongs to the bacterial ribosomal protein bL31 family. Type A subfamily. In terms of assembly, part of the 50S ribosomal subunit. Zn(2+) serves as cofactor.

Functionally, binds the 23S rRNA. The chain is Large ribosomal subunit protein bL31 from Pectobacterium atrosepticum (strain SCRI 1043 / ATCC BAA-672) (Erwinia carotovora subsp. atroseptica).